Reading from the N-terminus, the 705-residue chain is Polyribonucleotide nucleotidyltransferase (705 aa).

Mg(2+)-binding residues include D487 and D493. The KH domain occupies 554–613 (PKILTMSINPDKIRDVIGPSGKQINKIIEDTGVKIDIEQDGTIFISSTDESMNQKAKKII). Residues 623 to 691 (GQLYLGKVKR…KQGRVNLSRK (69 aa)) form the S1 motif domain.

Belongs to the polyribonucleotide nucleotidyltransferase family. The cofactor is Mg(2+).

Its subcellular location is the cytoplasm. The catalysed reaction is RNA(n+1) + phosphate = RNA(n) + a ribonucleoside 5'-diphosphate. Involved in mRNA degradation. Catalyzes the phosphorolysis of single-stranded polyribonucleotides processively in the 3'- to 5'-direction. The protein is Polyribonucleotide nucleotidyltransferase of Bacillus licheniformis (strain ATCC 14580 / DSM 13 / JCM 2505 / CCUG 7422 / NBRC 12200 / NCIMB 9375 / NCTC 10341 / NRRL NRS-1264 / Gibson 46).